We begin with the raw amino-acid sequence, 128 residues long: Gene 39 protein (128 aa).

The polypeptide is Gene 39 protein (39) (Mycobacterium (Mycobacteriophage D29)).